The following is a 314-amino-acid chain: Deoxymugineic acid synthase 1-B (314 aa).

The segment at 1–22 (MGAGDKTAAGMPRIGMGTAVQG) is disordered. NADP(+) is bound at residue Asp-44. The active-site Proton donor is the Tyr-49. His-112 lines the substrate pocket. NADP(+)-binding positions include 158 to 159 (AN), Gln-180, 258 to 266 (FDEARMREN), and 273 to 281 (ELTEEERRR).

Belongs to the aldo/keto reductase family. In terms of tissue distribution, mostly expressed in root tissues, observed in mesocotyl and embryonic roots, seedling roots, crown and seedling leafes, mature bracts, anthers, pistil, caryopsis and embryos.

It catalyses the reaction 2'-deoxymugineate + NAD(+) = 3''-deamino-3''-oxonicotianamine + NADH + H(+). The enzyme catalyses 2'-deoxymugineate + NADP(+) = 3''-deamino-3''-oxonicotianamine + NADPH + H(+). It participates in siderophore biosynthesis. Catalyzes the reduction of a 3''-keto intermediate during the biosynthesis of 2'-deoxymugineic acid (DMA) from L-Met. Involved in the formation of phytosiderophores (MAs) belonging to the mugineic acid family and required to acquire iron. This chain is Deoxymugineic acid synthase 1-B, found in Triticum aestivum (Wheat).